A 264-amino-acid chain; its full sequence is Low molecular mass lipoprotein PBMHP-12 (264 aa).

An N-terminal signal peptide occupies residues 1-16 (MKLLVVFAMCVPAASA).

The protein belongs to the 30 kDa lipoprotein family.

It is found in the secreted. The polypeptide is Low molecular mass lipoprotein PBMHP-12 (Bombyx mori (Silk moth)).